The chain runs to 101 residues: Protein RnfH (101 aa).

It belongs to the UPF0125 (RnfH) family.

In Coxiella burnetii (strain CbuK_Q154) (Coxiella burnetii (strain Q154)), this protein is Protein RnfH.